The primary structure comprises 178 residues: Ribosome maturation factor RimM (178 aa).

Residues 99 to 178 enclose the PRC barrel domain; sequence EGDYYWHDLI…TIEVDWDAGF (80 aa).

It belongs to the RimM family. Binds ribosomal protein uS19.

It is found in the cytoplasm. Its function is as follows. An accessory protein needed during the final step in the assembly of 30S ribosomal subunit, possibly for assembly of the head region. Essential for efficient processing of 16S rRNA. May be needed both before and after RbfA during the maturation of 16S rRNA. It has affinity for free ribosomal 30S subunits but not for 70S ribosomes. This chain is Ribosome maturation factor RimM, found in Haemophilus influenzae (strain ATCC 51907 / DSM 11121 / KW20 / Rd).